Reading from the N-terminus, the 773-residue chain is Cytochrome c oxidase subunit 1+2 (773 aa).

Positions 1–491 are COX1; that stretch reads MKLLEIYDKQ…LIASYGSLIT (491 aa). A helical transmembrane segment spans residues 41–61; the sequence is TMYITFSIFAGIIGTLLSLVI. E64 contacts Ca(2+). A Fe(II)-heme a-binding site is contributed by H85. Helical transmembrane passes span 87 to 111, 130 to 150, 173 to 193, 211 to 231, 262 to 278, and 290 to 310; these read LIMIFFVVMYCSMPAMLGGFANWFL, LWLIVVSFGLLLTSSCVGIGA, VGILSLHIAGASSLVGAINFL, LFVWSVVITAVLLVLSLPVLA, LFHPEVYILILPGFGII, and IFGVKGMISAMSAIGFLGFLV. H264 contacts Cu cation. Residues 264–268 constitute a cross-link (1'-histidyl-3'-tyrosine (His-Tyr)); it reads HPEVY. Y268 lines the O2 pocket. Cu cation-binding residues include H314 and H315. 2 consecutive transmembrane segments (helical) span residues 335 to 355 and 362 to 382; these read IIAIPTGIKIFSWLATLWGGV and MLFVIGFLVLFTIGGLTGVVL. Mg(2+) is bound by residues H392 and D393. Transmembrane regions (helical) follow at residues 396–416, 444–464, 483–503, 555–575, and 604–624; these read YVVAHFHYVLSMGAIFAIFAG, FWTMFIGVNVTFFPMHFLGLA, IASYGSLITAFGLLFFFVNIF, IFFYLIVVAVFIGWVMGRILW, and GTVIEIVWTLIPTVILYLIAI. H400 contributes to the heme a3 binding site. H402 contacts Fe(II)-heme a. Positions 492–773 are COX2; it reads AFGLLFFFVN…VQEYLGRLYK (282 aa). The Cu cation site is built by H709, C744, C748, and H752.

The protein in the N-terminal section; belongs to the heme-copper respiratory oxidase family. This sequence in the C-terminal section; belongs to the cytochrome c oxidase subunit 2 family. As to quaternary structure, component of the cytochrome c oxidase (complex IV, CIV), a multisubunit enzyme composed of a catalytic core of 3 subunits and several supernumerary subunits. The complex exists as a monomer or a dimer and forms supercomplexes (SCs) in the inner mitochondrial membrane with ubiquinol-cytochrome c oxidoreductase (cytochrome b-c1 complex, complex III, CIII). Heme is required as a cofactor. The cofactor is Cu cation.

It is found in the mitochondrion inner membrane. It carries out the reaction 4 Fe(II)-[cytochrome c] + O2 + 8 H(+)(in) = 4 Fe(III)-[cytochrome c] + 2 H2O + 4 H(+)(out). It functions in the pathway energy metabolism; oxidative phosphorylation. Component of the cytochrome c oxidase, the last enzyme in the mitochondrial electron transport chain which drives oxidative phosphorylation. The respiratory chain contains 3 multisubunit complexes succinate dehydrogenase (complex II, CII), ubiquinol-cytochrome c oxidoreductase (cytochrome b-c1 complex, complex III, CIII) and cytochrome c oxidase (complex IV, CIV), that cooperate to transfer electrons derived from NADH and succinate to molecular oxygen, creating an electrochemical gradient over the inner membrane that drives transmembrane transport and the ATP synthase. Cytochrome c oxidase is the component of the respiratory chain that catalyzes the reduction of oxygen to water. Electrons originating from reduced cytochrome c in the intermembrane space (IMS) are transferred via the dinuclear copper A center (CU(A)) of subunit 2 and heme A of subunit 1 to the active site in subunit 1, a binuclear center (BNC) formed by heme A3 and copper B (CU(B)). The BNC reduces molecular oxygen to 2 water molecules using 4 electrons from cytochrome c in the IMS and 4 protons from the mitochondrial matrix. In Dictyostelium citrinum (Slime mold), this protein is Cytochrome c oxidase subunit 1+2 (cox1/2).